A 20-amino-acid chain; its full sequence is Thylakoid lumenal 20 kDa protein (20 aa).

The interval 1 to 20 (RDVDVGSFLPKSPSDPSMVL) is disordered.

The protein localises to the plastid. The protein resides in the chloroplast thylakoid lumen. The polypeptide is Thylakoid lumenal 20 kDa protein (Spinacia oleracea (Spinach)).